The primary structure comprises 301 residues: Nucleotide-binding protein Rfer_1653 (301 aa).

An ATP-binding site is contributed by 15–22; it reads GMSGSGKS. GTP is bound at residue 64 to 67; it reads DVRT.

The protein belongs to the RapZ-like family.

Its function is as follows. Displays ATPase and GTPase activities. This chain is Nucleotide-binding protein Rfer_1653, found in Albidiferax ferrireducens (strain ATCC BAA-621 / DSM 15236 / T118) (Rhodoferax ferrireducens).